The sequence spans 179 residues: Photosystem I assembly protein Ycf4 (179 aa).

Helical transmembrane passes span 21–41 and 59–79; these read LISF…YLGV and IVMT…LLNI.

The protein belongs to the Ycf4 family.

It localises to the plastid. The protein localises to the chloroplast thylakoid membrane. Its function is as follows. Seems to be required for the assembly of the photosystem I complex. This is Photosystem I assembly protein Ycf4 from Rhodomonas salina (Cryptomonas salina).